A 436-amino-acid polypeptide reads, in one-letter code: Gamma-glutamyl phosphate reductase (436 aa).

The protein belongs to the gamma-glutamyl phosphate reductase family.

It localises to the cytoplasm. The enzyme catalyses L-glutamate 5-semialdehyde + phosphate + NADP(+) = L-glutamyl 5-phosphate + NADPH + H(+). Its pathway is amino-acid biosynthesis; L-proline biosynthesis; L-glutamate 5-semialdehyde from L-glutamate: step 2/2. Catalyzes the NADPH-dependent reduction of L-glutamate 5-phosphate into L-glutamate 5-semialdehyde and phosphate. The product spontaneously undergoes cyclization to form 1-pyrroline-5-carboxylate. This is Gamma-glutamyl phosphate reductase from Prochlorococcus marinus (strain MIT 9215).